The chain runs to 264 residues: MAEKTQRIGIFDSGLGGTTVLKELINSLPNEDYIYYGDNGNFPYGSGKTKNELQKLTERILDFFVKNNCKLVIVACNTASTAAIDYLREKFSLPIIGIIEAGVKIASKNTKNKNIAVISTKFTAESHGYKNKAKMLDSELNVKEIACIEFAQMIETGWDTFDNRKELLNKYLSEIPKNADTLVLGCTHYPLIREDIEKNIKIKVVDPAVEIVERTIQTLTSLNLLNDKKERGRIIFFVTGETYHFKPTAEKFLGKEIEIYRIPK.

Substrate is bound by residues 12-13 (DS) and 44-45 (YG). Catalysis depends on Cys76, which acts as the Proton donor/acceptor. 77–78 (NT) is a binding site for substrate. Cys186 acts as the Proton donor/acceptor in catalysis. 187–188 (TH) serves as a coordination point for substrate.

This sequence belongs to the aspartate/glutamate racemases family.

It carries out the reaction L-glutamate = D-glutamate. It functions in the pathway cell wall biogenesis; peptidoglycan biosynthesis. In terms of biological role, provides the (R)-glutamate required for cell wall biosynthesis. The protein is Glutamate racemase of Fusobacterium nucleatum subsp. nucleatum (strain ATCC 25586 / DSM 15643 / BCRC 10681 / CIP 101130 / JCM 8532 / KCTC 2640 / LMG 13131 / VPI 4355).